The sequence spans 516 residues: MALSQSVPFSATELLLASAIFCLVFWVLKGLRPRVPKGLKSPPEPWGWPLLGHVLTLRKNPHLALSRMSQRYGDVLQIRIGSTPVLVLSGLDTIRQALVRQGDDFKGRPDLYSSTLITDGQSLTFSPDSGPVWAARRHLAQNALNTFSIASDPASSYSCYLEEHVSKEAEALISRLQELMAGPGHFDPYNQVVVSVVNVIGAMCFGQHFPESSDEMLSLVKNTHEFVETASSGNPVDFFPILRYLPNPALQRFKAFNQRFLRFLRKTVQEHYQDFDKNSVQDIMGALFKYSKKGPRASGNLIPQEKIVNLVNDIFGAGFDTVTTAISWSLMYLVTKPEIQRKIQKELDTMIGRGRRPRLSDRPQLPYLKAFILETFRHSSFLPFTIPHSTTRDTTLNGFYIPKECCVFVNQWQVNHDPELWEDPSEFWPERFLTTDGTAINKPLSEKVMLFGMGKRRCIGEVLANWEVFLFLAILLQQLEFSVPPGVKVDLTPIYGLTMKHARCEHVQARLRFSIK.

An O-linked (GlcNAc) serine glycan is attached at S69. F226 is a binding site for substrate. Position 458 (C458) interacts with heme.

It belongs to the cytochrome P450 family. Interacts with PGRMC1; the interaction requires PGRMC1 homodimerization. It depends on heme as a cofactor.

It is found in the endoplasmic reticulum membrane. It localises to the microsome membrane. It catalyses the reaction an organic molecule + reduced [NADPH--hemoprotein reductase] + O2 = an alcohol + oxidized [NADPH--hemoprotein reductase] + H2O + H(+). It carries out the reaction 17beta-estradiol + reduced [NADPH--hemoprotein reductase] + O2 = 2-hydroxy-17beta-estradiol + oxidized [NADPH--hemoprotein reductase] + H2O + H(+). The enzyme catalyses 17beta-estradiol + reduced [NADPH--hemoprotein reductase] + O2 = 4-hydroxy-17beta-estradiol + oxidized [NADPH--hemoprotein reductase] + H2O + H(+). The catalysed reaction is estrone + reduced [NADPH--hemoprotein reductase] + O2 = 2-hydroxyestrone + oxidized [NADPH--hemoprotein reductase] + H2O + H(+). It catalyses the reaction estrone + reduced [NADPH--hemoprotein reductase] + O2 = 4-hydroxyestrone + oxidized [NADPH--hemoprotein reductase] + H2O + H(+). It carries out the reaction cholesterol + reduced [NADPH--hemoprotein reductase] + O2 = 25-hydroxycholesterol + oxidized [NADPH--hemoprotein reductase] + H2O + H(+). The enzyme catalyses all-trans-retinol + reduced [NADPH--hemoprotein reductase] + O2 = all-trans-retinal + oxidized [NADPH--hemoprotein reductase] + 2 H2O + H(+). The catalysed reaction is all-trans-retinal + reduced [NADPH--hemoprotein reductase] + O2 = all-trans-retinoate + oxidized [NADPH--hemoprotein reductase] + H2O + 2 H(+). It catalyses the reaction (5Z,8Z,11Z,14Z)-eicosatetraenoate + reduced [NADPH--hemoprotein reductase] + O2 = (14R,15S)-epoxy-(5Z,8Z,11Z)-eicosatrienoate + oxidized [NADPH--hemoprotein reductase] + H2O + H(+). It carries out the reaction (5Z,8Z,11Z,14Z)-eicosatetraenoate + reduced [NADPH--hemoprotein reductase] + O2 = (14S,15R)-epoxy-(5Z,8Z,11Z)-eicosatrienoate + oxidized [NADPH--hemoprotein reductase] + H2O + H(+). The enzyme catalyses (5Z,8Z,11Z,14Z,17Z)-eicosapentaenoate + reduced [NADPH--hemoprotein reductase] + O2 = (17R,18S)-epoxy-(5Z,8Z,11Z,14Z)-eicosatetraenoate + oxidized [NADPH--hemoprotein reductase] + H2O + H(+). The catalysed reaction is (4Z,7Z,10Z,13Z,16Z,19Z)-docosahexaenoate + reduced [NADPH--hemoprotein reductase] + O2 = (19R,20S)-epoxy-(4Z,7Z,10Z,13Z,16Z)-docosapentaenoate + oxidized [NADPH--hemoprotein reductase] + H2O + H(+). It catalyses the reaction (5S)-hydroperoxy-(6E,8Z,11Z,14Z)-eicosatetraenoate = 5-oxo-(6E,8Z,11Z,14Z)-eicosatetraenoate + H2O. It carries out the reaction (12S)-hydroperoxy-(5Z,8Z,10E,14Z)-eicosatetraenoate = 12-oxo-(5Z,8Z,10E,14Z)-eicosatetraenoate + H2O. The enzyme catalyses (15S)-hydroperoxy-(5Z,8Z,11Z,13E)-eicosatetraenoate = 15-oxo-(5Z,8Z,11Z,13E)-eicosatetraenoate + H2O. The catalysed reaction is (13S)-hydroperoxy-(9Z,11E)-octadecadienoate = 13-oxo-(9Z,11E)-octadecadienoate + H2O. It catalyses the reaction (5Z,8Z,11Z,14Z)-eicosatetraenoate + reduced [NADPH--hemoprotein reductase] + O2 = 13-hydroxy-(5Z,8Z,11Z,14Z)-eicosatetraenoate + oxidized [NADPH--hemoprotein reductase] + H2O + H(+). It carries out the reaction (5Z,8Z,11Z,14Z)-eicosatetraenoate + reduced [NADPH--hemoprotein reductase] + O2 = 19-hydroxy-(5Z,8Z,11Z,14Z)-eicosatetraenoate + oxidized [NADPH--hemoprotein reductase] + H2O + H(+). The enzyme catalyses (9Z,12Z)-octadecadienoate + reduced [NADPH--hemoprotein reductase] + O2 = 11-hydroxy-(9Z,12Z)-octadecadienoate + oxidized [NADPH--hemoprotein reductase] + H2O + H(+). It functions in the pathway cofactor metabolism; retinol metabolism. Its pathway is steroid metabolism; cholesterol metabolism. The protein operates within lipid metabolism; arachidonate metabolism. A cytochrome P450 monooxygenase involved in the metabolism of various endogenous substrates, including fatty acids, steroid hormones and vitamins. Mechanistically, uses molecular oxygen inserting one oxygen atom into a substrate, and reducing the second into a water molecule, with two electrons provided by NADPH via cytochrome P450 reductase (NADPH--hemoprotein reductase). Catalyzes the hydroxylation of carbon-hydrogen bonds. Exhibits high catalytic activity for the formation of hydroxyestrogens from estrone (E1) and 17beta-estradiol (E2), namely 2-hydroxy E1 and E2. Metabolizes cholesterol toward 25-hydroxycholesterol, a physiological regulator of cellular cholesterol homeostasis. May act as a major enzyme for all-trans retinoic acid biosynthesis in the liver. Catalyzes two successive oxidative transformation of all-trans retinol to all-trans retinal and then to the active form all-trans retinoic acid. Primarily catalyzes stereoselective epoxidation of the last double bond of polyunsaturated fatty acids (PUFA), displaying a strong preference for the (R,S) stereoisomer. Catalyzes bisallylic hydroxylation and omega-1 hydroxylation of PUFA. May also participate in eicosanoids metabolism by converting hydroperoxide species into oxo metabolites (lipoxygenase-like reaction, NADPH-independent). Plays a role in the oxidative metabolism of xenobiotics. Catalyzes the N-hydroxylation of heterocyclic amines and the O-deethylation of phenacetin. Metabolizes caffeine via N3-demethylation. This chain is Cytochrome P450 1A2 (CYP1A2), found in Pongo abelii (Sumatran orangutan).